Reading from the N-terminus, the 496-residue chain is Probable cytosol aminopeptidase (496 aa).

Mn(2+)-binding residues include Lys-266 and Asp-271. Lys-278 is an active-site residue. Residues Asp-289, Asp-348, and Glu-350 each coordinate Mn(2+). Residue Arg-352 is part of the active site.

It belongs to the peptidase M17 family. Mn(2+) serves as cofactor.

The protein resides in the cytoplasm. The enzyme catalyses Release of an N-terminal amino acid, Xaa-|-Yaa-, in which Xaa is preferably Leu, but may be other amino acids including Pro although not Arg or Lys, and Yaa may be Pro. Amino acid amides and methyl esters are also readily hydrolyzed, but rates on arylamides are exceedingly low.. It catalyses the reaction Release of an N-terminal amino acid, preferentially leucine, but not glutamic or aspartic acids.. Presumably involved in the processing and regular turnover of intracellular proteins. Catalyzes the removal of unsubstituted N-terminal amino acids from various peptides. This Pseudomonas syringae pv. tomato (strain ATCC BAA-871 / DC3000) protein is Probable cytosol aminopeptidase.